We begin with the raw amino-acid sequence, 77 residues long: U11-lycotoxin-Ls1d (77 aa).

The first 20 residues, methionine 1–alanine 20, serve as a signal peptide directing secretion. A propeptide spanning residues glutamate 21–arginine 26 is cleaved from the precursor.

The protein belongs to the neurotoxin 19 (CSTX) family. 10 (U11-Lctx) subfamily. In terms of processing, contains 4 disulfide bonds. Expressed by the venom gland.

It localises to the secreted. The chain is U11-lycotoxin-Ls1d from Lycosa singoriensis (Wolf spider).